The primary structure comprises 411 residues: Prophage integrase IntR (411 aa).

Residues Lys-81 to Tyr-176 form the Core-binding (CB) domain. One can recognise a Tyr recombinase domain in the interval Ile-197 to Ala-404. Residues Arg-231, Lys-266, Arg-358, and His-381 contribute to the active site. The O-(3'-phospho-DNA)-tyrosine intermediate role is filled by Tyr-391.

The protein belongs to the 'phage' integrase family.

Integrase is necessary for integration of the phage into the host genome by site-specific recombination. In conjunction with excisionase, integrase is also necessary for excision of the prophage from the host genome. In Escherichia coli (strain K12), this protein is Prophage integrase IntR (intR).